The sequence spans 446 residues: MKLFGTDGVRGKAGNFLTAELALRLAMAAGVYFRKNSLTNMILVGKDTRRSGYMIETAIVAGLTSVGFNVRQIGPMPTPAVAFLTEDMRCDAGIMISASHNPYYDNGIKFFDRTGFKLDEKEEAEIEKIYFSDKIINEARKQMMEIGTAKRVDDVIGRYIVHIKNSFPRSETLHNLRVVIDTANGASYKVAPTIFKELGAETIVLANEPNGKNINENCGALFPQNLANEVRRLRADVGFAFDGDADRLVVVDENGEIIHGDILLGILASYLKESGELANDKIVATVMSNKALDDFLAKIGISVIRTNVGDKFVLEKMREIGSNFGGEQSGHVIFGSFAKTGDGIVSALQFSACMIKMHKKSSEISKMIKPYPQILRNLKIKNKKPLDKIKGLDEFEKNIQKDGIRTLFRYSGTENLIRLLLEGKNEKLLNKKMDEAEEFFSKALND.

The active-site Phosphoserine intermediate is S99. Residues S99, D242, D244, and D246 each coordinate Mg(2+). Phosphoserine is present on S99.

Belongs to the phosphohexose mutase family. The cofactor is Mg(2+). Activated by phosphorylation.

It catalyses the reaction alpha-D-glucosamine 1-phosphate = D-glucosamine 6-phosphate. Catalyzes the conversion of glucosamine-6-phosphate to glucosamine-1-phosphate. This Campylobacter hominis (strain ATCC BAA-381 / DSM 21671 / CCUG 45161 / LMG 19568 / NCTC 13146 / CH001A) protein is Phosphoglucosamine mutase.